A 218-amino-acid polypeptide reads, in one-letter code: MPMTLGYWDIRGLAHAIRLLLEYTDSSYEEKKYTMGDAPDYDRSQWLNEKFKLGLDFPNLPYLIDGTHKITQSNAILRYIARKHNLCGETEEEKIRVDILENQAMDVSNQLARVCYSPDFEKLKPEYLEGLPTMMQHFSQFLGKRPWFVGDKITFVDFLAYDVLDLHRIFEPKCLDAFPNLKDFISHFEGLEKISAYMKSSRFLPKPLYTRVAVWGNK.

The region spanning 2 to 88 (PMTLGYWDIR…YIARKHNLCG (87 aa)) is the GST N-terminal domain. Glutathione is bound at residue 7–8 (YW). Threonine 34 carries the phosphothreonine modification. Residues 43 to 46 (RSQW), lysine 50, 59 to 60 (NL), and 72 to 73 (QS) contribute to the glutathione site. The GST C-terminal domain occupies 90 to 208 (TEEEKIRVDI…KSSRFLPKPL (119 aa)). Residue tyrosine 116 participates in substrate binding.

It belongs to the GST superfamily. Mu family. As to quaternary structure, homodimer.

It is found in the cytoplasm. The enzyme catalyses RX + glutathione = an S-substituted glutathione + a halide anion + H(+). It catalyses the reaction prostaglandin A2 + glutathione = prostaglandin A2-S-(R)-glutathione. It carries out the reaction prostaglandin J2 + glutathione = prostaglandin J2-S-(R)-glutathione. The catalysed reaction is prostaglandin J2 + glutathione = prostaglandin J2-S-(S)-glutathione. The enzyme catalyses prostaglandin A2 + glutathione = prostaglandin A2-S-(S)-glutathione. It catalyses the reaction 11(S)-hydroxy-14(S),15(S)-epoxy-(5Z,8Z,12E)-eicosatrienoate + glutathione = (11S,15S)-dihydroxy-14(R)-S-glutathionyl-(5Z,8Z,12E)-eicosatrienoate. Functionally, conjugation of reduced glutathione to a wide number of exogenous and endogenous hydrophobic electrophiles. Involved in the formation of glutathione conjugates of both prostaglandin A2 (PGA2) and prostaglandin J2 (PGJ2). Participates in the formation of novel hepoxilin regioisomers. This chain is Glutathione S-transferase Mu 1 (GSTM1), found in Macaca fascicularis (Crab-eating macaque).